Here is a 294-residue protein sequence, read N- to C-terminus: Pyrroline-5-carboxylate reductase (294 aa).

It belongs to the pyrroline-5-carboxylate reductase family.

Its subcellular location is the cytoplasm. The catalysed reaction is L-proline + NADP(+) = (S)-1-pyrroline-5-carboxylate + NADPH + 2 H(+). The enzyme catalyses L-proline + NAD(+) = (S)-1-pyrroline-5-carboxylate + NADH + 2 H(+). Its pathway is amino-acid biosynthesis; L-proline biosynthesis; L-proline from L-glutamate 5-semialdehyde: step 1/1. Its function is as follows. Catalyzes the reduction of 1-pyrroline-5-carboxylate (PCA) to L-proline. The chain is Pyrroline-5-carboxylate reductase from Mycobacterium leprae (strain TN).